Reading from the N-terminus, the 479-residue chain is Sulfate adenylyltransferase subunit 1 (479 aa).

One can recognise a tr-type G domain in the interval 25–239; that stretch reads KSLLRFLTCG…EVLETVDIQR (215 aa). Residues 34-41 are G1; it reads GSVDDGKS. 34-41 is a binding site for GTP; the sequence is GSVDDGKS. Residues 92 to 96 form a G2 region; sequence GITID. The segment at 113–116 is G3; it reads DTPG. Residues 113–117 and 168–171 contribute to the GTP site; these read DTPGH and NKMD. The segment at 168–171 is G4; it reads NKMD. Residues 206–208 are G5; it reads SAL.

Belongs to the TRAFAC class translation factor GTPase superfamily. Classic translation factor GTPase family. CysN/NodQ subfamily. Heterodimer composed of CysD, the smaller subunit, and CysN.

The enzyme catalyses sulfate + ATP + H(+) = adenosine 5'-phosphosulfate + diphosphate. It functions in the pathway sulfur metabolism; hydrogen sulfide biosynthesis; sulfite from sulfate: step 1/3. With CysD forms the ATP sulfurylase (ATPS) that catalyzes the adenylation of sulfate producing adenosine 5'-phosphosulfate (APS) and diphosphate, the first enzymatic step in sulfur assimilation pathway. APS synthesis involves the formation of a high-energy phosphoric-sulfuric acid anhydride bond driven by GTP hydrolysis by CysN coupled to ATP hydrolysis by CysD. This is Sulfate adenylyltransferase subunit 1 from Salmonella paratyphi B (strain ATCC BAA-1250 / SPB7).